The chain runs to 550 residues: Hydroxylamine reductase (550 aa).

The [2Fe-2S] cluster site is built by Cys3, Cys6, Cys18, and Cys25. Hybrid [4Fe-2O-2S] cluster contacts are provided by His249, Glu273, Cys317, Cys405, Cys433, Cys458, Glu492, and Lys494. Cys405 carries the post-translational modification Cysteine persulfide.

The protein belongs to the HCP family. [2Fe-2S] cluster serves as cofactor. It depends on hybrid [4Fe-2O-2S] cluster as a cofactor.

The protein localises to the cytoplasm. It carries out the reaction A + NH4(+) + H2O = hydroxylamine + AH2 + H(+). Its function is as follows. Catalyzes the reduction of hydroxylamine to form NH(3) and H(2)O. This Escherichia coli (strain SE11) protein is Hydroxylamine reductase.